We begin with the raw amino-acid sequence, 120 residues long: Large ribosomal subunit protein uL18 (120 aa).

Belongs to the universal ribosomal protein uL18 family. As to quaternary structure, part of the 50S ribosomal subunit; part of the 5S rRNA/L5/L18/L25 subcomplex. Contacts the 5S and 23S rRNAs.

Functionally, this is one of the proteins that bind and probably mediate the attachment of the 5S RNA into the large ribosomal subunit, where it forms part of the central protuberance. The chain is Large ribosomal subunit protein uL18 from Staphylococcus saprophyticus subsp. saprophyticus (strain ATCC 15305 / DSM 20229 / NCIMB 8711 / NCTC 7292 / S-41).